A 130-amino-acid polypeptide reads, in one-letter code: Small ribosomal subunit protein uS9 (130 aa).

The protein belongs to the universal ribosomal protein uS9 family.

The sequence is that of Small ribosomal subunit protein uS9 from Ectopseudomonas mendocina (strain ymp) (Pseudomonas mendocina).